The chain runs to 196 residues: Large ribosomal subunit protein bL25 (196 aa).

Residues 177-196 (VISIAPPKKDAEAETESAAG) form a disordered region.

This sequence belongs to the bacterial ribosomal protein bL25 family. CTC subfamily. Part of the 50S ribosomal subunit; part of the 5S rRNA/L5/L18/L25 subcomplex. Contacts the 5S rRNA. Binds to the 5S rRNA independently of L5 and L18.

This is one of the proteins that binds to the 5S RNA in the ribosome where it forms part of the central protuberance. The sequence is that of Large ribosomal subunit protein bL25 from Chlorobium limicola (strain DSM 245 / NBRC 103803 / 6330).